Here is a 345-residue protein sequence, read N- to C-terminus: Biotin synthase (345 aa).

The Radical SAM core domain maps to 39-266 (NEVQVSTLLS…ASHVRLSAGR (228 aa)). [4Fe-4S] cluster contacts are provided by Cys54, Cys58, and Cys61. Cys98, Cys129, Cys189, and Arg261 together coordinate [2Fe-2S] cluster.

Belongs to the radical SAM superfamily. Biotin synthase family. Homodimer. The cofactor is [4Fe-4S] cluster. It depends on [2Fe-2S] cluster as a cofactor.

The catalysed reaction is (4R,5S)-dethiobiotin + (sulfur carrier)-SH + 2 reduced [2Fe-2S]-[ferredoxin] + 2 S-adenosyl-L-methionine = (sulfur carrier)-H + biotin + 2 5'-deoxyadenosine + 2 L-methionine + 2 oxidized [2Fe-2S]-[ferredoxin]. It participates in cofactor biosynthesis; biotin biosynthesis; biotin from 7,8-diaminononanoate: step 2/2. Its function is as follows. Catalyzes the conversion of dethiobiotin (DTB) to biotin by the insertion of a sulfur atom into dethiobiotin via a radical-based mechanism. In Idiomarina loihiensis (strain ATCC BAA-735 / DSM 15497 / L2-TR), this protein is Biotin synthase.